The chain runs to 217 residues: Transcriptional regulator NovE (217 aa).

A disordered region spans residues 1–41 (MVASGRTASKGRGNGATPVRPTAGDATPVDSGQPSDTTYGG).

Its function is as follows. Transcription regulator that specifically regulates expression of genes involved in the novobiocin biosynthesis pathway. Probably acts as a positive regulator of transcription. Does not bind DNA. The polypeptide is Transcriptional regulator NovE (novE) (Streptomyces niveus (Streptomyces spheroides)).